The chain runs to 273 residues: Putative phosphoenolpyruvate synthase regulatory protein (273 aa).

Ala153–Thr160 provides a ligand contact to ADP.

This sequence belongs to the pyruvate, phosphate/water dikinase regulatory protein family. PSRP subfamily.

The enzyme catalyses [pyruvate, water dikinase] + ADP = [pyruvate, water dikinase]-phosphate + AMP + H(+). It catalyses the reaction [pyruvate, water dikinase]-phosphate + phosphate + H(+) = [pyruvate, water dikinase] + diphosphate. In terms of biological role, bifunctional serine/threonine kinase and phosphorylase involved in the regulation of the phosphoenolpyruvate synthase (PEPS) by catalyzing its phosphorylation/dephosphorylation. The protein is Putative phosphoenolpyruvate synthase regulatory protein of Stenotrophomonas maltophilia (strain R551-3).